Here is a 104-residue protein sequence, read N- to C-terminus: Large ribosomal subunit protein cL38 (104 aa).

The N-terminal 39 residues, 1-39, are a transit peptide targeting the chloroplast; it reads MASVSSIFGCGVSMAPNSSLRNKAIRTERRSACGGLLIE. The segment at 42–76 is disordered; the sequence is SRPQKKSTAHHMKTRPRKSRLSDRNRKPTVYAPLP. The span at 44-60 shows a compositional bias: basic residues; the sequence is PQKKSTAHHMKTRPRKS.

Belongs to the chloroplast-specific ribosomal protein cL38 family. In terms of assembly, part of the 50S ribosomal subunit.

The protein localises to the plastid. It is found in the chloroplast. The sequence is that of Large ribosomal subunit protein cL38 (PSRP6) from Pisum sativum (Garden pea).